We begin with the raw amino-acid sequence, 234 residues long: MRIIVADCSAEYSERLNASLPLAKRVLLIKADNSLLIFSELGSYKPLNWMSAPCSIRDITPDHADDDVDTEVPQKVIRASADKSNDVLEVTLQRIYSDESYDLGEDPGLIKDGVEDHLQKYLAEQIERIGKGAKLVRREYPTAIGPVDIMAIDGNGEHVAIEIKRNGGIDGVEQLTRYCDLLNRDPLLAPVHGIFAAQTITPQARVLAQDRGFKCLLLDYEEMKGTEDDSLRLF.

It belongs to the NucS endonuclease family.

It localises to the cytoplasm. Functionally, cleaves both 3' and 5' ssDNA extremities of branched DNA structures. This Bifidobacterium adolescentis (strain ATCC 15703 / DSM 20083 / NCTC 11814 / E194a) protein is Endonuclease NucS.